Here is a 233-residue protein sequence, read N- to C-terminus: N-(5'-phosphoribosyl)anthranilate isomerase (233 aa).

It belongs to the TrpF family.

It catalyses the reaction N-(5-phospho-beta-D-ribosyl)anthranilate = 1-(2-carboxyphenylamino)-1-deoxy-D-ribulose 5-phosphate. The protein operates within amino-acid biosynthesis; L-tryptophan biosynthesis; L-tryptophan from chorismate: step 3/5. This Ralstonia pickettii (strain 12J) protein is N-(5'-phosphoribosyl)anthranilate isomerase.